The sequence spans 139 residues: ATP synthase epsilon chain 2 (139 aa).

The protein belongs to the ATPase epsilon chain family. In terms of assembly, F-type ATPases have 2 components, CF(1) - the catalytic core - and CF(0) - the membrane proton channel. CF(1) has five subunits: alpha(3), beta(3), gamma(1), delta(1), epsilon(1). CF(0) has three main subunits: a, b and c.

Its subcellular location is the cell inner membrane. Its function is as follows. Produces ATP from ADP in the presence of a proton gradient across the membrane. In Paraburkholderia xenovorans (strain LB400), this protein is ATP synthase epsilon chain 2.